A 54-amino-acid chain; its full sequence is Toxin AnmTx Cj 1c-1 (54 aa).

The N-terminal stretch at 1–7 (MLNKRGV) is a signal peptide. 3 disulfides stabilise this stretch: Cys9–Cys50, Cys11–Cys41, and Cys33–Cys51. The residue at position 53 (Glu53) is a Glutamic acid 1-amide.

It belongs to the sea anemone sodium channel inhibitory toxin family. Type I subfamily. Contains 3 disulfide bonds.

Its subcellular location is the secreted. The protein resides in the nematocyst. In vivo, induces marked paralysis on shrimps (C.multidentata) at 10-20 seconds after injection and a weak toxicity when injected into insect larvae (M.domestica). This is Toxin AnmTx Cj 1c-1 from Epiactis japonica (Sea anemone).